The sequence spans 149 residues: MSQTHRILLLNGPNLNMLGAREPKHYGSISLTSIEEKIQTLATQHNVKVECFQANSEEKLINKIHESFQQVDFILINPAAYTHTSVALRDALLAVSIPFVEIHLSNVHKREPFRHHSYFSDVAEGVICGLGAKGYEFAFLFAMDYLAKK.

Y26 functions as the Proton acceptor in the catalytic mechanism. 3 residues coordinate substrate: N77, H83, and D90. The Proton donor role is filled by H103. Substrate-binding positions include 104–105 and R114; that span reads LS.

Belongs to the type-II 3-dehydroquinase family. As to quaternary structure, homododecamer.

The enzyme catalyses 3-dehydroquinate = 3-dehydroshikimate + H2O. Its pathway is metabolic intermediate biosynthesis; chorismate biosynthesis; chorismate from D-erythrose 4-phosphate and phosphoenolpyruvate: step 3/7. Catalyzes a trans-dehydration via an enolate intermediate. The protein is 3-dehydroquinate dehydratase of Haemophilus influenzae (strain PittEE).